The sequence spans 129 residues: HTH-type transcriptional regulator DdrOP3 (129 aa).

In terms of domain architecture, HTH cro/C1-type spans 7-61 (LRELRQERGLRLKDIAGAAQISVPYLSDLERGRTNPSLETLQSLASTYGITVHDL). The segment at residues 18 to 37 (LKDIAGAAQISVPYLSDLER) is a DNA-binding region (H-T-H motif).

In terms of processing, cleaved between Leu-106 and Arg-107 by the IrrE metalloprotease after exposure to radiation. Cleavage inactivates DdrOP3, leading to derepression of the target genes.

Functionally, repressor specific for genes preceded by a radiation/desiccation response motif (RDRM) site, which is present upstream of several radiation-induced genes. The sequence is that of HTH-type transcriptional regulator DdrOP3 from Deinococcus deserti (strain DSM 17065 / CIP 109153 / LMG 22923 / VCD115).